The primary structure comprises 77 residues: MARVTVEDCLIHENSRFRLVLAASKRARQLTLGHQPLVAPENDKPTVLALREIEEGKVTVQGLLDGQDVSEHLARQA.

The protein belongs to the RNA polymerase subunit omega family. As to quaternary structure, the RNAP catalytic core consists of 2 alpha, 1 beta, 1 beta' and 1 omega subunit. When a sigma factor is associated with the core the holoenzyme is formed, which can initiate transcription.

The catalysed reaction is RNA(n) + a ribonucleoside 5'-triphosphate = RNA(n+1) + diphosphate. Functionally, promotes RNA polymerase assembly. Latches the N- and C-terminal regions of the beta' subunit thereby facilitating its interaction with the beta and alpha subunits. The chain is DNA-directed RNA polymerase subunit omega from Dichelobacter nodosus (strain VCS1703A).